The chain runs to 239 residues: Small ribosomal subunit protein uS3 (239 aa).

Residues 39 to 107 (VRQVLRKKMS…PVHINVIEVR (69 aa)) form the KH type-2 domain. A disordered region spans residues 214–239 (SQEKQDDGSRGDRNADRSSRRSREVR). The span at 216 to 239 (EKQDDGSRGDRNADRSSRRSREVR) shows a compositional bias: basic and acidic residues.

It belongs to the universal ribosomal protein uS3 family. As to quaternary structure, part of the 30S ribosomal subunit. Forms a tight complex with proteins S10 and S14.

Its function is as follows. Binds the lower part of the 30S subunit head. Binds mRNA in the 70S ribosome, positioning it for translation. The polypeptide is Small ribosomal subunit protein uS3 (Xylella fastidiosa (strain M23)).